A 202-amino-acid polypeptide reads, in one-letter code: Peptide methionine sulfoxide reductase A1 (202 aa).

The tract at residues 1 to 20 is disordered; that stretch reads MNILNKLGIGSSRQTNMDPS. A Phosphoserine modification is found at Ser-189.

The protein belongs to the MsrA Met sulfoxide reductase family.

The protein localises to the cytoplasm. The protein resides in the cytosol. The catalysed reaction is L-methionyl-[protein] + [thioredoxin]-disulfide + H2O = L-methionyl-(S)-S-oxide-[protein] + [thioredoxin]-dithiol. The enzyme catalyses [thioredoxin]-disulfide + L-methionine + H2O = L-methionine (S)-S-oxide + [thioredoxin]-dithiol. In terms of biological role, catalyzes the reduction of methionine sulfoxide (MetSO) to methionine in proteins. Plays a protective role against oxidative stress by restoring activity to proteins that have been inactivated by methionine oxidation. MSRA family specifically reduces the MetSO S-enantiomer. The polypeptide is Peptide methionine sulfoxide reductase A1 (MSRA1) (Arabidopsis thaliana (Mouse-ear cress)).